We begin with the raw amino-acid sequence, 523 residues long: Katanin p60 ATPase-containing subunit A1 (523 aa).

The disordered stretch occupies residues 82 to 215 (KEAPTGRRAA…DGKSKRGLYE (134 aa)). The segment covering 178-194 (AGARSSTAGKKGAASKS) has biased composition (low complexity). 279–286 (GPPGTGKT) provides a ligand contact to ATP.

The protein belongs to the AAA ATPase family. Katanin p60 subunit A1 subfamily. In terms of assembly, may homooligomerize. Component of KTN80-KTN1 complexes composed of a hexamer of KTN1-KTN80 heterodimers that sense microtubule (MT) geometry to confer precise MT severing. Interacts directly with KTN80.1, KTN80.2, KTN80.3 and KTN80.4. Can interact with KTN80.1. May interact with the kinesin related protein KIN14A. Interacts with microtubule polymers. Binds to IPGA1. In terms of tissue distribution, expressed ubiquitously, including siliques, flowers, leaves, stems and roots.

The protein resides in the cytoplasm. It localises to the cytoskeleton. The catalysed reaction is n ATP + n H2O + a microtubule = n ADP + n phosphate + (n+1) alpha/beta tubulin heterodimers.. In terms of biological role, severs microtubules in vitro in an ATP-dependent manner. Required for oligomerization of functional KTN80-KTN1 complexes that catalyze microtubule severing. This activity may promote rapid reorganization of cellular microtubule arrays. May be required for reorientation of cortical microtubule arrays during cellular elongation. Failure to correctly orient these arrays drastically compromises fiber length, cell wall thickness and mechanical strength. May also be required for the spatial organization of developmental cues within the root. Involved in the IPGA1- and AN-dependent regulation of pavement cells morphogenesis leading to puzzle shape. The polypeptide is Katanin p60 ATPase-containing subunit A1 (Arabidopsis thaliana (Mouse-ear cress)).